The primary structure comprises 93 residues: Parbolysin P2 (93 aa).

2 cysteine pairs are disulfide-bonded: Cys16–Cys37 and Cys22–Cys33.

The protein belongs to the worm cytolysin family. In terms of tissue distribution, localized within the skin and proboscis and are most readily isolated from body mucus secretions.

It is found in the secreted. Its function is as follows. Cytolysin that shows hemolytic activity (on bovine erythrocytes, HC(50)=5.75 mg/ml). This hemolytic activity is completely inhibited by small unilamelar vesicles composed of PC/PG, PC/PI and PC/PS in 1:1 molar ratios (with at least 100 mg/ml concentration). The protein is Parbolysin P2 of Parborlasia corrugatus (Antarctic nemertean worm).